An 85-amino-acid chain; its full sequence is Toxin 3FTx-Lei1 (85 aa).

The first 21 residues, 1–21 (MKTLLLSLVVVTFVCLDLAHT), serve as a signal peptide directing secretion. Cystine bridges form between C24–C45, C27–C32, C38–C63, C67–C78, and C79–C84.

This sequence belongs to the three-finger toxin family. Ancestral subfamily. In terms of tissue distribution, expressed by the venom gland.

Its subcellular location is the secreted. This chain is Toxin 3FTx-Lei1, found in Leioheterodon madagascariensis (Malagasy giant hognose snake).